The sequence spans 320 residues: Lipoyl synthase (320 aa).

Cys67, Cys72, Cys78, Cys93, Cys97, Cys100, and Ser307 together coordinate [4Fe-4S] cluster. Residues 79-296 (FNHGTATFMI…RDKANEMGFE (218 aa)) form the Radical SAM core domain.

Belongs to the radical SAM superfamily. Lipoyl synthase family. The cofactor is [4Fe-4S] cluster.

It is found in the cytoplasm. It carries out the reaction [[Fe-S] cluster scaffold protein carrying a second [4Fe-4S](2+) cluster] + N(6)-octanoyl-L-lysyl-[protein] + 2 oxidized [2Fe-2S]-[ferredoxin] + 2 S-adenosyl-L-methionine + 4 H(+) = [[Fe-S] cluster scaffold protein] + N(6)-[(R)-dihydrolipoyl]-L-lysyl-[protein] + 4 Fe(3+) + 2 hydrogen sulfide + 2 5'-deoxyadenosine + 2 L-methionine + 2 reduced [2Fe-2S]-[ferredoxin]. It functions in the pathway protein modification; protein lipoylation via endogenous pathway; protein N(6)-(lipoyl)lysine from octanoyl-[acyl-carrier-protein]: step 2/2. Functionally, catalyzes the radical-mediated insertion of two sulfur atoms into the C-6 and C-8 positions of the octanoyl moiety bound to the lipoyl domains of lipoate-dependent enzymes, thereby converting the octanoylated domains into lipoylated derivatives. The polypeptide is Lipoyl synthase (Haemophilus influenzae (strain ATCC 51907 / DSM 11121 / KW20 / Rd)).